Here is a 161-residue protein sequence, read N- to C-terminus: Ribonuclease H (161 aa).

Residues 5–149 (EKLAIAAATD…VDAIAVAFSK (145 aa)) enclose the RNase H type-1 domain. Aspartate 14, glutamate 53, aspartate 78, and aspartate 141 together coordinate Mg(2+).

It belongs to the RNase H family. As to quaternary structure, monomer. Mg(2+) serves as cofactor.

It localises to the cytoplasm. The enzyme catalyses Endonucleolytic cleavage to 5'-phosphomonoester.. Functionally, endonuclease that specifically degrades the RNA of RNA-DNA hybrids. The sequence is that of Ribonuclease H from Prochlorococcus marinus (strain NATL2A).